The following is a 322-amino-acid chain: Sulfate adenylyltransferase subunit 2 (322 aa).

This sequence belongs to the PAPS reductase family. CysD subfamily. As to quaternary structure, heterodimer composed of CysD, the smaller subunit, and CysN.

The catalysed reaction is sulfate + ATP + H(+) = adenosine 5'-phosphosulfate + diphosphate. It functions in the pathway sulfur metabolism; hydrogen sulfide biosynthesis; sulfite from sulfate: step 1/3. Functionally, with CysN forms the ATP sulfurylase (ATPS) that catalyzes the adenylation of sulfate producing adenosine 5'-phosphosulfate (APS) and diphosphate, the first enzymatic step in sulfur assimilation pathway. APS synthesis involves the formation of a high-energy phosphoric-sulfuric acid anhydride bond driven by GTP hydrolysis by CysN coupled to ATP hydrolysis by CysD. The polypeptide is Sulfate adenylyltransferase subunit 2 (Bradyrhizobium sp. (strain BTAi1 / ATCC BAA-1182)).